The chain runs to 292 residues: Thyroxine 5-deiodinase (292 aa).

Topologically, residues 1-30 (VVGEGRGALGGAATMLRSLLLHSLRLCAQT) are cytoplasmic. Residues 31-50 (ASCLVLFPRFLGTAFMLWLL) form a helical; Signal-anchor for type II membrane protein membrane-spanning segment. Over 51–292 (DFLCIRKHLL…QLHGPQPRRV (242 aa)) the chain is Extracellular. U158 is a catalytic residue. A non-standard amino acid (selenocysteine) is located at residue U158.

It belongs to the iodothyronine deiodinase family. Monomer. Homodimer. May undergo minor heretodimerization with DIO1 and DIO2.

It is found in the cell membrane. Its subcellular location is the endosome membrane. The enzyme catalyses 3,3',5'-triiodo-L-thyronine + iodide + A + H(+) = L-thyroxine + AH2. It carries out the reaction 3,3'-diiodo-L-thyronine + iodide + A + H(+) = 3,3',5-triiodo-L-thyronine + AH2. It catalyses the reaction 3-iodo-L-thyronine + iodide + A + H(+) = 3,5-diiodo-L-thyronine + AH2. The catalysed reaction is L-thyronine + iodide + A + H(+) = 3-iodo-L-thyronine + AH2. The enzyme catalyses 3',5'-diiodo-L-thyronine + iodide + A + H(+) = 3,3',5'-triiodo-L-thyronine + AH2. It carries out the reaction 3'-iodo-L-thyronine + iodide + A + H(+) = 3,3'-diiodo-L-thyronine + AH2. It catalyses the reaction 3,3',5'-triiodothyronamine + iodide + A + H(+) = 3,3',5,5'-tetraiodothyronamine + AH2. The catalysed reaction is 3',5'-diiodothyronamine + iodide + A + H(+) = 3,3',5'-triiodothyronamine + AH2. The enzyme catalyses 3,3'-diiodothyronamine + iodide + A + H(+) = 3,3',5-triiodothyronamine + AH2. It carries out the reaction 3-iodothyronamine + iodide + A + H(+) = 3,5-diiodothyronamine + AH2. It catalyses the reaction 3'-iodothyronamine + iodide + A + H(+) = 3,3'-diiodothyronamine + AH2. The catalysed reaction is thyronamine + iodide + A + H(+) = 3-iodothyronamine + AH2. Plays a crucial role in the metabolism of thyroid hormones (TH) and has specific roles in TH activation and inactivation by deiodination.Catalyzes the deiodination of L-thyroxine (T4) to 3,3',5'-triiodothyronine (rT3), 3,5,3'-triiodothyronine (T3) to 3,3'-diiodothyronine (3,3'-T2), 3,5-diiodothyronine (3,5-T2) to 3-monoiodothyronine (3-T1), rT3 to 3',5'-diiodothyronine (3',5'-T2) and 3,3'-T2 to 3'-monoiodothyronine (3'-T1) via inner-ring deiodination (IRD). Catalyzes the deiodination of 3-T1 to L-thyronine (T0) via outer-ring deiodination (ORD). Catalyzes the tyrosyl ring deiodinations of 3,3',5,5'-tetraiodothyronamine, 3,3',5'-triiodothyronamine, 3,5,3'-triiodothyronamine, 3,5-diiodothyronamine, 3,3'-diiodothyronamine and 3-iodothyronamine. The sequence is that of Thyroxine 5-deiodinase (DIO3) from Ovis aries (Sheep).